We begin with the raw amino-acid sequence, 176 residues long: Acireductone dioxygenase (176 aa).

Fe(2+) contacts are provided by histidine 100, histidine 102, glutamate 106, and histidine 145. Ni(2+) is bound by residues histidine 100, histidine 102, glutamate 106, and histidine 145.

It belongs to the acireductone dioxygenase (ARD) family. In terms of assembly, monomer. It depends on Fe(2+) as a cofactor. Ni(2+) serves as cofactor.

The enzyme catalyses 1,2-dihydroxy-5-(methylsulfanyl)pent-1-en-3-one + O2 = 3-(methylsulfanyl)propanoate + CO + formate + 2 H(+). It carries out the reaction 1,2-dihydroxy-5-(methylsulfanyl)pent-1-en-3-one + O2 = 4-methylsulfanyl-2-oxobutanoate + formate + 2 H(+). It participates in amino-acid biosynthesis; L-methionine biosynthesis via salvage pathway; L-methionine from S-methyl-5-thio-alpha-D-ribose 1-phosphate: step 5/6. Functionally, catalyzes 2 different reactions between oxygen and the acireductone 1,2-dihydroxy-3-keto-5-methylthiopentene (DHK-MTPene) depending upon the metal bound in the active site. Fe-containing acireductone dioxygenase (Fe-ARD) produces formate and 2-keto-4-methylthiobutyrate (KMTB), the alpha-ketoacid precursor of methionine in the methionine recycle pathway. Ni-containing acireductone dioxygenase (Ni-ARD) produces methylthiopropionate, carbon monoxide and formate, and does not lie on the methionine recycle pathway. In Bacillus pumilus (strain SAFR-032), this protein is Acireductone dioxygenase.